A 105-amino-acid polypeptide reads, in one-letter code: uncharacterized protein (105 aa).

This sequence to C.jejuni CJ1463.

This is an uncharacterized protein from Helicobacter pylori (strain ATCC 700392 / 26695) (Campylobacter pylori).